A 303-amino-acid chain; its full sequence is Aspartate carbamoyltransferase catalytic subunit (303 aa).

Carbamoyl phosphate contacts are provided by Arg-54 and Thr-55. Lys-83 contacts L-aspartate. Carbamoyl phosphate is bound by residues Arg-104, His-132, and Gln-135. L-aspartate is bound by residues Arg-164 and Arg-226. Carbamoyl phosphate is bound by residues Leu-265 and Pro-266.

This sequence belongs to the aspartate/ornithine carbamoyltransferase superfamily. ATCase family. In terms of assembly, heterooligomer of catalytic and regulatory chains.

It catalyses the reaction carbamoyl phosphate + L-aspartate = N-carbamoyl-L-aspartate + phosphate + H(+). It participates in pyrimidine metabolism; UMP biosynthesis via de novo pathway; (S)-dihydroorotate from bicarbonate: step 2/3. Functionally, catalyzes the condensation of carbamoyl phosphate and aspartate to form carbamoyl aspartate and inorganic phosphate, the committed step in the de novo pyrimidine nucleotide biosynthesis pathway. In Methanocorpusculum labreanum (strain ATCC 43576 / DSM 4855 / Z), this protein is Aspartate carbamoyltransferase catalytic subunit.